Consider the following 396-residue polypeptide: Ribosomal RNA large subunit methyltransferase I (396 aa).

Residues 2 to 81 (TVRLILAKGR…ESIDIDFFVR (80 aa)) form the PUA domain.

The protein belongs to the methyltransferase superfamily. RlmI family.

Its subcellular location is the cytoplasm. It carries out the reaction cytidine(1962) in 23S rRNA + S-adenosyl-L-methionine = 5-methylcytidine(1962) in 23S rRNA + S-adenosyl-L-homocysteine + H(+). Functionally, specifically methylates the cytosine at position 1962 (m5C1962) of 23S rRNA. The protein is Ribosomal RNA large subunit methyltransferase I of Erwinia tasmaniensis (strain DSM 17950 / CFBP 7177 / CIP 109463 / NCPPB 4357 / Et1/99).